Reading from the N-terminus, the 432-residue chain is Crenactin (432 aa).

ATP-binding positions include 20 to 24, 182 to 184, 235 to 239, 354 to 358, and glutamine 399; these read TSYVK, GGH, EVVKR, and GAFSW.

This sequence belongs to the actin family. As to quaternary structure, monomer. The crenactin monomers polymerize into right-handed helical filaments, with 8 subunits per complete turn of the helix. Forms single-stranded filaments under high salt concentrations and double-stranded filaments under low salt concentrations. Interacts with arcadin-1 and arcadin-2.

The protein localises to the cytoplasm. The protein resides in the cytoskeleton. It catalyses the reaction ATP + H2O = ADP + phosphate + H(+). Its activity is regulated as follows. Crenactin polymerization is inhibited by interaction with arcadin-2. Also significantly inhibited by elevated antibiotic A22 concentrations. Its function is as follows. Forms the backbone of an actin-like archaeal cytoskeleton, which is involved in cell shape determination. Has ATPase activity. Shows highest activity towards ATP or GTP as nucleotide, and only residual activity on UTP, CTP and dNTPs. This chain is Crenactin, found in Pyrobaculum calidifontis (strain DSM 21063 / JCM 11548 / VA1).